The chain runs to 210 residues: Adenylate kinase (210 aa).

G10–T15 contributes to the ATP binding site. Residues S30 to I54 form an NMP region. AMP is bound by residues R36, E52 to I54, G80 to R83, and Q87. The LID stretch occupies residues G117–D154. Residues R118 and I127–Y128 contribute to the ATP site. AMP-binding residues include R151 and R162. Position 195 (F195) interacts with ATP.

The protein belongs to the adenylate kinase family. Monomer.

The protein localises to the cytoplasm. The catalysed reaction is AMP + ATP = 2 ADP. It participates in purine metabolism; AMP biosynthesis via salvage pathway; AMP from ADP: step 1/1. Its function is as follows. Catalyzes the reversible transfer of the terminal phosphate group between ATP and AMP. Plays an important role in cellular energy homeostasis and in adenine nucleotide metabolism. The sequence is that of Adenylate kinase from Wigglesworthia glossinidia brevipalpis.